The primary structure comprises 280 residues: F420-dependent methylenetetrahydromethanopterin dehydrogenase (280 aa).

It belongs to the MTD family.

The enzyme catalyses 5,10-methylenetetrahydromethanopterin + oxidized coenzyme F420-(gamma-L-Glu)(n) + 2 H(+) = 5,10-methenyl-5,6,7,8-tetrahydromethanopterin + reduced coenzyme F420-(gamma-L-Glu)(n). Its pathway is one-carbon metabolism; methanogenesis from CO(2); 5,10-methylene-5,6,7,8-tetrahydromethanopterin from 5,10-methenyl-5,6,7,8-tetrahydromethanopterin (coenzyme F420 route): step 1/1. Functionally, catalyzes the reversible reduction of methenyl-H(4)MPT(+) to methylene-H(4)MPT. The protein is F420-dependent methylenetetrahydromethanopterin dehydrogenase of Methanosphaerula palustris (strain ATCC BAA-1556 / DSM 19958 / E1-9c).